The sequence spans 407 residues: 8-amino-7-oxononanoate synthase (407 aa).

R24 provides a ligand contact to substrate. 111-112 (GF) contacts pyridoxal 5'-phosphate. Residue H137 coordinates substrate. S183, H211, and T239 together coordinate pyridoxal 5'-phosphate. Residue K242 is modified to N6-(pyridoxal phosphate)lysine. T356 is a substrate binding site.

It belongs to the class-II pyridoxal-phosphate-dependent aminotransferase family. BioF subfamily. As to quaternary structure, homodimer. It depends on pyridoxal 5'-phosphate as a cofactor.

It catalyses the reaction 6-carboxyhexanoyl-[ACP] + L-alanine + H(+) = (8S)-8-amino-7-oxononanoate + holo-[ACP] + CO2. Its pathway is cofactor biosynthesis; biotin biosynthesis. Functionally, catalyzes the decarboxylative condensation of pimeloyl-[acyl-carrier protein] and L-alanine to produce 8-amino-7-oxononanoate (AON), [acyl-carrier protein], and carbon dioxide. The sequence is that of 8-amino-7-oxononanoate synthase from Stenotrophomonas maltophilia (strain R551-3).